The sequence spans 670 residues: DNA ligase (670 aa).

NAD(+)-binding positions include 33–37 (DAEYD), 82–83 (SL), and glutamate 114. The active-site N6-AMP-lysine intermediate is lysine 116. 4 residues coordinate NAD(+): arginine 137, glutamate 174, lysine 291, and lysine 315. Zn(2+) contacts are provided by cysteine 409, cysteine 412, cysteine 427, and cysteine 433. The 78-residue stretch at 593-670 (GAELPLEGKT…TEQDLLELIN (78 aa)) folds into the BRCT domain.

The protein belongs to the NAD-dependent DNA ligase family. LigA subfamily. Requires Mg(2+) as cofactor. It depends on Mn(2+) as a cofactor.

It catalyses the reaction NAD(+) + (deoxyribonucleotide)n-3'-hydroxyl + 5'-phospho-(deoxyribonucleotide)m = (deoxyribonucleotide)n+m + AMP + beta-nicotinamide D-nucleotide.. DNA ligase that catalyzes the formation of phosphodiester linkages between 5'-phosphoryl and 3'-hydroxyl groups in double-stranded DNA using NAD as a coenzyme and as the energy source for the reaction. It is essential for DNA replication and repair of damaged DNA. In Vibrio parahaemolyticus serotype O3:K6 (strain RIMD 2210633), this protein is DNA ligase.